Here is a 121-residue protein sequence, read N- to C-terminus: Histone H2B (121 aa).

Residues 1-27 (MAPKKAPAAAEKKVKKAPTTEKKNKKK) form a disordered region. Ala-2 carries the n,N,N-trimethylalanine modification. N6-acetyllysine is present on residues Lys-5 and Lys-41. Lys-115 is covalently cross-linked (Glycyl lysine isopeptide (Lys-Gly) (interchain with G-Cter in ubiquitin)).

Belongs to the histone H2B family. In terms of assembly, the nucleosome is a histone octamer containing two molecules each of H2A, H2B, H3 and H4 assembled in one H3-H4 heterotetramer and two H2A-H2B heterodimers. The octamer wraps approximately 147 bp of DNA. Post-translationally, monoubiquitination of Lys-115 gives a specific tag for epigenetic transcriptional activation and is also prerequisite for histone H3 'Lys-4' and 'Lys-79' methylation. In terms of processing, acetylation occurs almost exclusively in the MAC.

Its subcellular location is the nucleus. The protein resides in the chromosome. In terms of biological role, core component of nucleosome. Nucleosomes wrap and compact DNA into chromatin, limiting DNA accessibility to the cellular machineries which require DNA as a template. Histones thereby play a central role in transcription regulation, DNA repair, DNA replication and chromosomal stability. DNA accessibility is regulated via a complex set of post-translational modifications of histones, also called histone code, and nucleosome remodeling. This Tetrahymena pyriformis protein is Histone H2B.